The sequence spans 63 residues: uncharacterized protein (63 aa).

An N-terminal signal peptide occupies residues 1 to 18 (MLNSEHFNLIQRALDATA).

This is an uncharacterized protein from Bacillus subtilis (strain 168).